The primary structure comprises 193 residues: Cilia- and flagella-associated protein 20 (193 aa).

The protein belongs to the CFAP20 family. In terms of assembly, microtubule inner protein component of sperm flagellar doublet microtubules.

The protein resides in the nucleus. Its subcellular location is the cytoplasm. It is found in the cytoskeleton. It localises to the microtubule organizing center. The protein localises to the centrosome. The protein resides in the centriole. Its subcellular location is the cilium basal body. It is found in the cilium axoneme. It localises to the flagellum axoneme. Functionally, cilium- and flagellum-specific protein that plays a role in axonemal structure organization and motility. Microtubule inner protein (MIP) part of the dynein-decorated doublet microtubules (DMTs) in cilia axoneme, which is required for motile cilia beating. Involved in the regulation of the size and morphology of cilia. Required for axonemal microtubules polyglutamylation. This Homo sapiens (Human) protein is Cilia- and flagella-associated protein 20.